Here is a 1512-residue protein sequence, read N- to C-terminus: Lysophospholipase NTE1 (1512 aa).

Topologically, residues 1-48 (MAAPDAMTSLVKSSVALLSSAHESLPTSLAAMKTAETAPSSTFGILGR) are cytoplasmic. The chain crosses the membrane as a helical span at residues 49-69 (VILSILSVLPTLLFWVSYTLP). Residues 70 to 83 (TWLFTLFSMSLTFT) lie on the Lumenal side of the membrane. A helical transmembrane segment spans residues 84–104 (MNFTTLMLVLVFVVSTISYFV). Over 105–1512 (RYRYLTMYAR…RTMAPRRASI (1408 aa)) the chain is Cytoplasmic. Disordered stretches follow at residues 204-230 (NREE…QAHR), 262-362 (RHDE…AHPD), 534-556 (TQMS…QHDV), and 740-770 (TEDD…KRSR). A compositionally biased stretch (acidic residues) spans 208 to 217 (SDSDEDDGEL). Residues 268–291 (GPSSSTPMSPQHRPSMTRNSSFNM) are compositionally biased toward polar residues. Residues 343–358 (HSKQRRSPSRSTKPKS) show a composition bias toward basic residues. Over residues 537-549 (SRGTGRSGRSSFS) the composition is skewed to low complexity. A nucleoside 3',5'-cyclic phosphate contacts are provided by residues 669-793 (LSAS…SNRS) and 830-950 (RLTT…IASR). A compositionally biased stretch (polar residues) spans 751–761 (PTATNTSLRNG). A PNPLA domain is found at 1209–1373 (LVLGGGGARG…IDNLTVAHMK (165 aa)). The GXGXXG motif lies at 1213-1218 (GGGARG). Positions 1240 to 1244 (GTSIG) match the GXSXG motif. S1242 (nucleophile) is an active-site residue. Catalysis depends on D1360, which acts as the Proton acceptor. Residues 1360-1362 (DGG) carry the DGA/G motif.

Belongs to the NTE family.

The protein resides in the endoplasmic reticulum membrane. The enzyme catalyses a 1-acyl-sn-glycero-3-phosphocholine + H2O = sn-glycerol 3-phosphocholine + a fatty acid + H(+). Its activity is regulated as follows. Inhibited by organophosphorus esters. In terms of biological role, intracellular phospholipase B that catalyzes the double deacylation of phosphatidylcholine (PC) to glycerophosphocholine (GroPCho). Plays an important role in membrane lipid homeostasis. Responsible for the rapid PC turnover in response to inositol, elevated temperatures, or when choline is present in the growth medium. In Phaeosphaeria nodorum (strain SN15 / ATCC MYA-4574 / FGSC 10173) (Glume blotch fungus), this protein is Lysophospholipase NTE1 (NTE1).